A 296-amino-acid chain; its full sequence is MANLVLKTDFPDLKLVARGKVRDIYDLGEALLIVTTDRISAFDVIMNEGIPDKGYVLTQISAFWFRQMEDIIPNHIISTEVKDFPAECQKYAADLEGRSMLVKKANPLPAECIVRGYISGSGWKDYKATGSICGIKLPAGLVESDKLEEPIFTPSTKAELGTHDENISFDRMVEMMGKELAGKVRDVTIAIYKRARDIADAKGIIIADTKFEYGIYNGELIIIDECMTPDSSRFWPKDSYKPGGAQPSFDKQFLRDYLETLDWNKTAPAPPLPAEIVKKTGEKYMEALVRLTGKGK.

The protein belongs to the SAICAR synthetase family.

It catalyses the reaction 5-amino-1-(5-phospho-D-ribosyl)imidazole-4-carboxylate + L-aspartate + ATP = (2S)-2-[5-amino-1-(5-phospho-beta-D-ribosyl)imidazole-4-carboxamido]succinate + ADP + phosphate + 2 H(+). The protein operates within purine metabolism; IMP biosynthesis via de novo pathway; 5-amino-1-(5-phospho-D-ribosyl)imidazole-4-carboxamide from 5-amino-1-(5-phospho-D-ribosyl)imidazole-4-carboxylate: step 1/2. This chain is Phosphoribosylaminoimidazole-succinocarboxamide synthase, found in Geobacter metallireducens (strain ATCC 53774 / DSM 7210 / GS-15).